Consider the following 284-residue polypeptide: Parvulin-like PPIase (284 aa).

A signal peptide spans 1–20 (MKKLSIVLLSVSMLSSIAFA). Positions 139 to 232 (KEQIKVAHIL…YGWHIIKVLE (94 aa)) constitute a PpiC domain.

Belongs to the PpiC/parvulin rotamase family.

It is found in the cell outer membrane. It carries out the reaction [protein]-peptidylproline (omega=180) = [protein]-peptidylproline (omega=0). In Rickettsia bellii (strain RML369-C), this protein is Parvulin-like PPIase (plp).